We begin with the raw amino-acid sequence, 282 residues long: 2-dehydro-3-deoxyphosphooctonate aldolase (282 aa).

Belongs to the KdsA family.

The protein resides in the cytoplasm. It catalyses the reaction D-arabinose 5-phosphate + phosphoenolpyruvate + H2O = 3-deoxy-alpha-D-manno-2-octulosonate-8-phosphate + phosphate. It functions in the pathway carbohydrate biosynthesis; 3-deoxy-D-manno-octulosonate biosynthesis; 3-deoxy-D-manno-octulosonate from D-ribulose 5-phosphate: step 2/3. It participates in bacterial outer membrane biogenesis; lipopolysaccharide biosynthesis. The sequence is that of 2-dehydro-3-deoxyphosphooctonate aldolase from Bordetella avium (strain 197N).